The chain runs to 262 residues: Ribosomal RNA small subunit methyltransferase A (262 aa).

S-adenosyl-L-methionine-binding residues include His-16, Leu-18, Gly-43, Glu-64, Asp-89, and Asn-109.

Belongs to the class I-like SAM-binding methyltransferase superfamily. rRNA adenine N(6)-methyltransferase family. RsmA subfamily.

The protein localises to the cytoplasm. It catalyses the reaction adenosine(1518)/adenosine(1519) in 16S rRNA + 4 S-adenosyl-L-methionine = N(6)-dimethyladenosine(1518)/N(6)-dimethyladenosine(1519) in 16S rRNA + 4 S-adenosyl-L-homocysteine + 4 H(+). Its function is as follows. Specifically dimethylates two adjacent adenosines (A1518 and A1519) in the loop of a conserved hairpin near the 3'-end of 16S rRNA in the 30S particle. May play a critical role in biogenesis of 30S subunits. The protein is Ribosomal RNA small subunit methyltransferase A of Xanthomonas campestris pv. campestris (strain B100).